A 416-amino-acid chain; its full sequence is Putative competence-damage inducible protein (416 aa).

It belongs to the CinA family.

This is Putative competence-damage inducible protein from Bacillus velezensis (strain DSM 23117 / BGSC 10A6 / LMG 26770 / FZB42) (Bacillus amyloliquefaciens subsp. plantarum).